The primary structure comprises 393 residues: NAD(P)H-quinone oxidoreductase subunit H, chloroplastic (393 aa).

Belongs to the complex I 49 kDa subunit family. In terms of assembly, NDH is composed of at least 16 different subunits, 5 of which are encoded in the nucleus.

The protein resides in the plastid. The protein localises to the chloroplast thylakoid membrane. It carries out the reaction a plastoquinone + NADH + (n+1) H(+)(in) = a plastoquinol + NAD(+) + n H(+)(out). The catalysed reaction is a plastoquinone + NADPH + (n+1) H(+)(in) = a plastoquinol + NADP(+) + n H(+)(out). In terms of biological role, NDH shuttles electrons from NAD(P)H:plastoquinone, via FMN and iron-sulfur (Fe-S) centers, to quinones in the photosynthetic chain and possibly in a chloroplast respiratory chain. The immediate electron acceptor for the enzyme in this species is believed to be plastoquinone. Couples the redox reaction to proton translocation, and thus conserves the redox energy in a proton gradient. The chain is NAD(P)H-quinone oxidoreductase subunit H, chloroplastic from Lactuca sativa (Garden lettuce).